Consider the following 519-residue polypeptide: Exodeoxyribonuclease 7 large subunit (519 aa).

Belongs to the XseA family. In terms of assembly, heterooligomer composed of large and small subunits.

Its subcellular location is the cytoplasm. It carries out the reaction Exonucleolytic cleavage in either 5'- to 3'- or 3'- to 5'-direction to yield nucleoside 5'-phosphates.. In terms of biological role, bidirectionally degrades single-stranded DNA into large acid-insoluble oligonucleotides, which are then degraded further into small acid-soluble oligonucleotides. The protein is Exodeoxyribonuclease 7 large subunit of Cereibacter sphaeroides (strain ATCC 17025 / ATH 2.4.3) (Rhodobacter sphaeroides).